The chain runs to 107 residues: Iron-binding protein IscA (107 aa).

C35, C99, and C101 together coordinate Fe cation.

This sequence belongs to the HesB/IscA family. As to quaternary structure, homodimer; may form tetramers and higher multimers. Requires Fe cation as cofactor.

Functionally, is able to transfer iron-sulfur clusters to apo-ferredoxin. Multiple cycles of [2Fe2S] cluster formation and transfer are observed, suggesting that IscA acts catalytically. Recruits intracellular free iron so as to provide iron for the assembly of transient iron-sulfur cluster in IscU in the presence of IscS, L-cysteine and the thioredoxin reductase system TrxA/TrxB. The protein is Iron-binding protein IscA of Klebsiella pneumoniae subsp. pneumoniae (strain ATCC 700721 / MGH 78578).